Here is a 258-residue protein sequence, read N- to C-terminus: Tetraspanin-18B (258 aa).

Topologically, residues 1–25 (MGLGEASARGTSMEGDCLSCIKYLM) are cytoplasmic. Residues 26–46 (FVFNFLIFLGGSFLLGVGVWV) traverse the membrane as a helical segment. The Extracellular portion of the chain corresponds to 47–61 (VVDPTGFREIVAANP). Residues 62 to 82 (LLFTGVYIILAMGGMLFLLGF) traverse the membrane as a helical segment. The Cytoplasmic segment spans residues 83-94 (LGCCGAIRENKC). A helical transmembrane segment spans residues 95 to 115 (LLLFFFMLILIIFLAELAAAI). Topologically, residues 116 to 228 (LAFIFREHLT…SAVVDYFEMY (113 aa)) are extracellular. N-linked (GlcNAc...) asparagine glycosylation is present at asparagine 141. Residues 229–249 (IYVAGALAIVVLTIELFAMVF) form a helical membrane-spanning segment. Topologically, residues 250–258 (AMCLFRGIQ) are cytoplasmic.

The protein belongs to the tetraspanin (TM4SF) family.

Its subcellular location is the membrane. Functionally, may regulate angiogenesis through KDR/VEGFR2 and NOTCH1 pathways. The protein is Tetraspanin-18B (tspan18b) of Danio rerio (Zebrafish).